Consider the following 331-residue polypeptide: Nucleotide-binding protein SGR_5570 (331 aa).

The disordered stretch occupies residues 1 to 43; it reads MTENTHETAPNTADTDTADFDTADTDRADGAADVSTNTPNETG. 55-62 contributes to the ATP binding site; it reads GMSGAGRS. Position 106 to 109 (106 to 109) interacts with GTP; that stretch reads DVRG.

It belongs to the RapZ-like family.

Its function is as follows. Displays ATPase and GTPase activities. In Streptomyces griseus subsp. griseus (strain JCM 4626 / CBS 651.72 / NBRC 13350 / KCC S-0626 / ISP 5235), this protein is Nucleotide-binding protein SGR_5570.